The chain runs to 177 residues: ATP synthase subunit delta (177 aa).

It belongs to the ATPase delta chain family. In terms of assembly, F-type ATPases have 2 components, F(1) - the catalytic core - and F(0) - the membrane proton channel. F(1) has five subunits: alpha(3), beta(3), gamma(1), delta(1), epsilon(1). F(0) has three main subunits: a(1), b(2) and c(10-14). The alpha and beta chains form an alternating ring which encloses part of the gamma chain. F(1) is attached to F(0) by a central stalk formed by the gamma and epsilon chains, while a peripheral stalk is formed by the delta and b chains.

It is found in the cell membrane. Its function is as follows. F(1)F(0) ATP synthase produces ATP from ADP in the presence of a proton or sodium gradient. F-type ATPases consist of two structural domains, F(1) containing the extramembraneous catalytic core and F(0) containing the membrane proton channel, linked together by a central stalk and a peripheral stalk. During catalysis, ATP synthesis in the catalytic domain of F(1) is coupled via a rotary mechanism of the central stalk subunits to proton translocation. This protein is part of the stalk that links CF(0) to CF(1). It either transmits conformational changes from CF(0) to CF(1) or is implicated in proton conduction. This Macrococcus caseolyticus (strain JCSC5402) (Macrococcoides caseolyticum) protein is ATP synthase subunit delta.